Consider the following 22-residue polypeptide: NDMA-dependent alcohol dehydrogenase (22 aa).

It belongs to the zinc-containing alcohol dehydrogenase family. In terms of assembly, homotetramer. Requires NADH as cofactor.

It is found in the cytoplasm. It carries out the reaction N,N-dimethyl-4-nitrosoaniline + a primary alcohol = 4-(hydroxylamino)-N,N-dimethylaniline + an aldehyde. The catalysed reaction is ethanol + A = acetaldehyde + AH2. Functionally, this is a novel enzyme, catalytically different from common alcohol dehydrogenases. It is effective in oxidizing ethanol, other primary alcohols and benzylalcohol only in the presence of p-nitroso-N,N-dimethylaniline (NDMA) as an electron acceptor. NADH acts as a cofactor here instead of as a coenzyme. The polypeptide is NDMA-dependent alcohol dehydrogenase (Rhodococcus erythropolis (Arthrobacter picolinophilus)).